An 883-amino-acid polypeptide reads, in one-letter code: Mitogen-activated protein kinase kinase kinase YODA (883 aa).

Disordered regions lie at residues 28 to 193, 303 to 364, and 376 to 396; these read GFAS…AEMF, CSPE…PPLL, and SAAT…TVSP. Low complexity predominate over residues 57-72; it reads SRLPSRSPSPSTRVSR. Positions 94-105 are enriched in polar residues; sequence VTSTDSGMNGSQ. A compositionally biased stretch (low complexity) spans 143–165; that stretch reads SVSSGSSVGDIPSDSLLSPLASD. 2 stretches are compositionally biased toward polar residues: residues 167–189 and 314–328; these read ENGN…NKNS and RMTS…QSGA. Positions 400-656 constitute a Protein kinase domain; that stretch reads WKKGRLLGMG…AAQLLDHAFV (257 aa). ATP is bound by residues 406-414 and Lys429; that span reads LGMGSFGHV. Asp525 functions as the Proton acceptor in the catalytic mechanism. 2 disordered regions span residues 712 to 773 and 787 to 838; these read GSGF…GAIP and EGIG…IQPG. Low complexity predominate over residues 733–756; the sequence is SPIFHSHSPHISGRRSPSPISSPH.

Belongs to the protein kinase superfamily. STE Ser/Thr protein kinase family. MAP kinase kinase kinase subfamily. As to quaternary structure, interacts with ASK7. Interacts with BSK12/SSP. Binds to BASL and MPK6. As to expression, expressed in roots, leaves, guard cells, stems, flowers and siliques.

The protein localises to the cytoplasm. It is found in the cell cortex. The protein resides in the cell membrane. It catalyses the reaction L-seryl-[protein] + ATP = O-phospho-L-seryl-[protein] + ADP + H(+). The catalysed reaction is L-threonyl-[protein] + ATP = O-phospho-L-threonyl-[protein] + ADP + H(+). Its activity is regulated as follows. Contains an N-terminal autoinhibitory domain. Functions in a MAP kinase cascade that acts as a molecular switch to regulate the first cell fate decisions in the zygote and the early embryo. Promotes elongation of the zygote and development of its basal daughter cell into the extra-embryonic suspensor. In stomatal development, acts downstream of the LRR receptor TMM, but upstream of the MKK4/MKK5-MPK3/MPK6 module to regulate stomatal cell fate before the guard mother cell (GMC) is specified. Plays a central role in both guard cell identity and pattern formation. This MAPK cascade also functions downstream of the ER receptor in regulating coordinated local cell proliferation, which shapes the morphology of plant organs. Upon brassinosteroid signaling, is inhibited by phosphorylation of its auto-inhibitory N-terminal domain by the GSK3-like kinase ASK7. The sequence is that of Mitogen-activated protein kinase kinase kinase YODA from Arabidopsis thaliana (Mouse-ear cress).